We begin with the raw amino-acid sequence, 320 residues long: Ferrochelatase (320 aa).

Positions 194 and 275 each coordinate Fe cation.

This sequence belongs to the ferrochelatase family. As to quaternary structure, monomer.

It localises to the cytoplasm. It carries out the reaction heme b + 2 H(+) = protoporphyrin IX + Fe(2+). It functions in the pathway porphyrin-containing compound metabolism; protoheme biosynthesis; protoheme from protoporphyrin-IX: step 1/1. Its function is as follows. Catalyzes the ferrous insertion into protoporphyrin IX. This is Ferrochelatase from Shigella boydii serotype 4 (strain Sb227).